The sequence spans 152 residues: Ribosome maturation factor RimP (152 aa).

Belongs to the RimP family.

The protein localises to the cytoplasm. Functionally, required for maturation of 30S ribosomal subunits. The chain is Ribosome maturation factor RimP from Shigella boydii serotype 4 (strain Sb227).